The chain runs to 760 residues: Cyclin-D-binding Myb-like transcription factor 1 (760 aa).

Positions 1–237 are interaction with CCND2; the sequence is MSTVEEDSDT…TPEEIEKLKE (237 aa). Residues 24–63 form a disordered region; it reads DTDGNLILHCPQNDPDEIDSEDSTEPPHKRLCLSSEDDQS. Over residues 37 to 47 the composition is skewed to acidic residues; it reads DPDEIDSEDST. Positions 87 to 170 are required for transcriptional activation; the sequence is VTMTATTEVA…IDILMNNIER (84 aa). The required for DNA-binding stretch occupies residues 87 to 458; it reads VTMTATTEVA…DNTAISPSPM (372 aa). The segment at 176–690 is interaction with CCND1, CCND2 and CCND3; that stretch reads GIKDATEIIF…PTIVHQVHQT (515 aa). Positions 225–263 constitute a Myb-like 1 domain; the sequence is GKYTPEEIEKLKELRIKHGNDWATIGAALGRSASSVKDR. Residues 268 to 333 form the HTH myb-type domain; sequence KDTCNTGKWT…KWLNYLNWKQ (66 aa). The H-T-H motif DNA-binding region spans 306-329; sequence WAAVAERVGTRSEKQCRSKWLNYL. Residues 339 to 388 form the Myb-like 2 domain; the sequence is WTKEDEINLILRIAELDVADENDINWDLLAEGWSSVRSPQWLRSKWWTIK. Residues 459-760 are required for transcriptional activation; the sequence is AALQIPVQIT…KDVEDLVNCH (302 aa). Disordered stretches follow at residues 593-614 and 738-760; these read DSDLHSSDFPEPPDALEADTFP and IGSSLGSPVSEDSKDVEDLVNCH.

The protein belongs to the DMTF1 family. In terms of assembly, interacts with the D-type cyclins CCND1, CCND2 and CCND3. Interaction with D-type cyclins may modulate transcriptional activation by this protein. In terms of processing, phosphorylated by the cyclin-D2/CDK4, cyclin-D3/CDK4 and cyclin-D2/CDK6 complexes and to a lesser extent by the cyclin-D1/CDK4 complex.

The protein localises to the nucleus. In terms of biological role, transcriptional activator which activates the CDKN2A/ARF locus in response to Ras-Raf signaling, thereby promoting p53/TP53-dependent growth arrest. Binds to the consensus sequence 5'-CCCG[GT]ATGT-3'. The polypeptide is Cyclin-D-binding Myb-like transcription factor 1 (Dmtf1) (Rattus norvegicus (Rat)).